The primary structure comprises 86 residues: Large ribosomal subunit protein bL27 (86 aa).

Residues Met-1–Thr-10 are compositionally biased toward gly residues. The segment at Met-1–Leu-21 is disordered.

Belongs to the bacterial ribosomal protein bL27 family.

This Cupriavidus necator (strain ATCC 17699 / DSM 428 / KCTC 22496 / NCIMB 10442 / H16 / Stanier 337) (Ralstonia eutropha) protein is Large ribosomal subunit protein bL27.